A 912-amino-acid chain; its full sequence is MSRFFTTGSDSESESSLSGEELVTKPVGGNYGKQPLLLSEDEEDTKRVVRSAKDKRFEELTNLIRTIRNAMKIRDVTKCLEEFELLGKAYGKAKSIVDKEGVPRFYIRILADLEDYLNELWEDKEGKKKMNKNNAKALSTLRQKIRKYNRDFESHITNYKQNPEQSADEDAEKNEEDSEGSSDEDEDDDGVTAAAFLKKKSEAPSGDSRKFLKKEDEDEDSEESEDSEAWDTSSTSSDSDSEEEEGKQTVLASRFLKKAPTTEEDKKAAEKKREDKAKKKHDRKSRRPDEEEEDNEGGEWERVRGGVPLVKEKPKMFAKGTEITHAVVIKKLNEILQARGKKGTDRAAQIELLQLLVQIASENNLGEGVIVKIKFNIIASLYDYNPNLATYMKPEMWQKCLDCINELMDILFANPNIFVGENILEESENLHNADQPLRVRGCILTLVERMDEEFTKIMQNTDPHSQEYVEHLKDEAQVCAIIERVQRYLEEKGTTEEVCRIYLRRILHTYYKFDYKAHQRQLTPPEGSSKSEQDQAENEGEDSAVLMERLCKYIYAKDRTDRIRTCAILCHIYHHALHSRWYQARDLMLMSHLQDNIQHADPPVQILYNRTMVQLGICAFRQGLTKDAHNALLDIQSSGRAKELLGQGLLLRSLQERNQEQEKVERRRQVPFHLHINLELLECVYLVSAMLLEIPYMAAHESDARRRMISKQFHHQLRVGERQPLLGPPESMREHVVAASKAMKMGDWKTCHSFIINEKMNGKVWDLFPEADKVRTMLVRKIQEESLRTYLFTYSSVYDSISMETLSDMFELDLPTVHSIISKMIINEELMASLDQPTQTVVMHRTEPTAQQNLALQLAEKLGSLVENNERVFDHKQGTYGGYFRDQKDGYRKNEGYMRRGGYRQQQSQTAY.

A disordered region spans residues 1–44; that stretch reads MSRFFTTGSDSESESSLSGEELVTKPVGGNYGKQPLLLSEDEED. Residues 8-21 are compositionally biased toward low complexity; the sequence is GSDSESESSLSGEE. A phosphoserine mark is found at Ser-9, Ser-11, Ser-13, Ser-15, Ser-16, Ser-18, and Ser-39. An N6-acetyllysine modification is found at Lys-99. Disordered regions lie at residues 157 to 305 and 521 to 541; these read TNYK…RVRG and QLTPPEGSSKSEQDQAENEGE. Ser-166, Ser-178, Ser-181, and Ser-182 each carry phosphoserine. Over residues 166–190 the composition is skewed to acidic residues; sequence SADEDAEKNEEDSEGSSDEDEDDDG. Over residues 199 to 215 the composition is skewed to basic and acidic residues; the sequence is KKSEAPSGDSRKFLKKE. The segment covering 216–229 has biased composition (acidic residues); sequence DEDEDSEESEDSEA. The segment covering 260-277 has biased composition (basic and acidic residues); the sequence is PTTEEDKKAAEKKREDKA. Residues 521–530 are compositionally biased toward polar residues; sequence QLTPPEGSSK. Thr-523 carries the phosphothreonine modification. Lys-642 carries the N6-acetyllysine modification. Residues 672–848 form the PCI domain; the sequence is FHLHINLELL…QTVVMHRTEP (177 aa). The tract at residues 884–912 is disordered; that stretch reads FRDQKDGYRKNEGYMRRGGYRQQQSQTAY. Positions 885–898 are enriched in basic and acidic residues; the sequence is RDQKDGYRKNEGYM. Ser-908 is subject to Phosphoserine.

It belongs to the eIF-3 subunit C family. Component of the eukaryotic translation initiation factor 3 (eIF-3) complex, which is composed of 13 subunits: EIF3A, EIF3B, EIF3C, EIF3D, EIF3E, EIF3F, EIF3G, EIF3H, EIF3I, EIF3J, EIF3K, EIF3L and EIF3M. The eIF-3 complex appears to include 3 stable modules: module A is composed of EIF3A, EIF3B, EIF3G and EIF3I; module B is composed of EIF3F, EIF3H, and EIF3M; and module C is composed of EIF3C, EIF3D, EIF3E, EIF3K and EIF3L. EIF3C of module C binds EIF3B of module A and EIF3H of module B, thereby linking the three modules. EIF3J is a labile subunit that binds to the eIF-3 complex via EIF3B. The eIF-3 complex interacts with RPS6KB1 under conditions of nutrient depletion. Mitogenic stimulation leads to binding and activation of a complex composed of MTOR and RPTOR, leading to phosphorylation and release of RPS6KB1 and binding of EIF4B to eIF-3. Identified in a HCV IRES-mediated translation complex, at least composed of EIF3C, IGF2BP1, RPS3 and HCV RNA-replicon. Interacts with ALKBH4, IFIT1 and IFIT2. Interacts with BZW2/5MP1. Post-translationally, phosphorylated. Phosphorylation is enhanced upon serum stimulation.

It is found in the cytoplasm. In terms of biological role, component of the eukaryotic translation initiation factor 3 (eIF-3) complex, which is required for several steps in the initiation of protein synthesis. The eIF-3 complex associates with the 40S ribosome and facilitates the recruitment of eIF-1, eIF-1A, eIF-2:GTP:methionyl-tRNAi and eIF-5 to form the 43S pre-initiation complex (43S PIC). The eIF-3 complex stimulates mRNA recruitment to the 43S PIC and scanning of the mRNA for AUG recognition. The eIF-3 complex is also required for disassembly and recycling of post-termination ribosomal complexes and subsequently prevents premature joining of the 40S and 60S ribosomal subunits prior to initiation. The eIF-3 complex specifically targets and initiates translation of a subset of mRNAs involved in cell proliferation, including cell cycling, differentiation and apoptosis, and uses different modes of RNA stem-loop binding to exert either translational activation or repression. This is Eukaryotic translation initiation factor 3 subunit C from Bos taurus (Bovine).